The primary structure comprises 302 residues: Zygote arrest protein 2.S (302 aa).

Disordered stretches follow at residues tyrosine 15–proline 46, valine 88–cysteine 117, and leucine 138–lysine 195. Residues leucine 159–glutamate 178 are compositionally biased toward basic and acidic residues. The 3CxxC-type zinc-finger motif lies at glutamine 203–lysine 288.

Belongs to the ZAR1 family. As to expression, oocyte-specific.

Its subcellular location is the cytoplasm. The protein localises to the cytoplasmic ribonucleoprotein granule. In terms of biological role, mRNA-binding protein required for maternal mRNA storage, translation and degradation during oocyte maturation. Probably promotes formation of some phase-separated membraneless compartment that stores maternal mRNAs in oocytes: acts by undergoing liquid-liquid phase separation upon binding to maternal mRNAs. Binds to the 3'-UTR of maternal mRNAs, inhibiting their translation. The chain is Zygote arrest protein 2.S from Xenopus laevis (African clawed frog).